A 427-amino-acid chain; its full sequence is Serine--tRNA ligase (427 aa).

Residue 232–234 (TAE) coordinates L-serine. 263–265 (RSE) serves as a coordination point for ATP. Glutamate 286 lines the L-serine pocket. ATP is bound at residue 350–353 (EISS). L-serine is bound at residue serine 385.

This sequence belongs to the class-II aminoacyl-tRNA synthetase family. Type-1 seryl-tRNA synthetase subfamily. In terms of assembly, homodimer. The tRNA molecule binds across the dimer.

It is found in the cytoplasm. It carries out the reaction tRNA(Ser) + L-serine + ATP = L-seryl-tRNA(Ser) + AMP + diphosphate + H(+). The enzyme catalyses tRNA(Sec) + L-serine + ATP = L-seryl-tRNA(Sec) + AMP + diphosphate + H(+). Its pathway is aminoacyl-tRNA biosynthesis; selenocysteinyl-tRNA(Sec) biosynthesis; L-seryl-tRNA(Sec) from L-serine and tRNA(Sec): step 1/1. Catalyzes the attachment of serine to tRNA(Ser). Is also able to aminoacylate tRNA(Sec) with serine, to form the misacylated tRNA L-seryl-tRNA(Sec), which will be further converted into selenocysteinyl-tRNA(Sec). This chain is Serine--tRNA ligase, found in Lacticaseibacillus paracasei (strain ATCC 334 / BCRC 17002 / CCUG 31169 / CIP 107868 / KCTC 3260 / NRRL B-441) (Lactobacillus paracasei).